The chain runs to 372 residues: Glutamine synthetase (372 aa).

Positions 24 to 103 (VIAEYVWVDG…VLAECFNSDG (80 aa)) constitute a GS beta-grasp domain. Residues 110 to 372 (HRHEANKLFQ…KEYERETNEQ (263 aa)) enclose the GS catalytic domain.

Belongs to the glutamine synthetase family. In terms of assembly, homooctamer.

The protein resides in the cytoplasm. It carries out the reaction L-glutamate + NH4(+) + ATP = L-glutamine + ADP + phosphate + H(+). In Candida glabrata (strain ATCC 2001 / BCRC 20586 / JCM 3761 / NBRC 0622 / NRRL Y-65 / CBS 138) (Yeast), this protein is Glutamine synthetase (GLN1).